Here is a 438-residue protein sequence, read N- to C-terminus: SPbeta prophage-derived uncharacterized protein YopA (438 aa).

Residues 391–411 traverse the membrane as a helical segment; it reads LHVLYLGVWYLELLTLGILGY.

The protein resides in the cell membrane. The chain is SPbeta prophage-derived uncharacterized protein YopA (yopA) from Bacillus subtilis (strain 168).